Reading from the N-terminus, the 418-residue chain is Perilipin-1 homolog (418 aa).

The segment at 211 to 275 (LTIGQRVKNL…EKKTWVIEKS (65 aa)) is required for lipid droplet localization.

The protein belongs to the perilipin family. In terms of tissue distribution, expressed in intestinal and epidermal cells. Expressed in the muscle and hypodermis.

Its subcellular location is the lipid droplet. Functionally, lipid droplet-associated protein which plays a role in lipid droplet clustering. This is Perilipin-1 homolog from Caenorhabditis elegans.